A 307-amino-acid polypeptide reads, in one-letter code: MANLQERGHLLTEQVNPLSQNLDQLSSLELVELFNSEDRKTIEAVAAAKVQIATAIEQTADRLRQGGRLFYVGAGTSGRLGVLDAAECPPTFCTPPELVQGIIAGGAGALVRSSEDLEDRAEDGDAAIAQRHITQLDVVVGITAGGTTPFVQGAINSARQRGALTIFIACVPAEQVSFTADIDIRLLTGPEILAGSTRLKAGTVTKLTLNILSTGVMVKLGKVYGNRMVDVAVTNQKLRDRALRILEDLTGLSREAAGFLLERSGKWVKLALVMHWTGLDKDAGDRLLSAHQGNLREAVASYKNQGN.

The 164-residue stretch at 59–222 (TADRLRQGGR…STGVMVKLGK (164 aa)) folds into the SIS domain. Catalysis depends on Glu-87, which acts as the Proton donor. The active site involves Glu-118.

The protein belongs to the GCKR-like family. MurNAc-6-P etherase subfamily. Homodimer.

The enzyme catalyses N-acetyl-D-muramate 6-phosphate + H2O = N-acetyl-D-glucosamine 6-phosphate + (R)-lactate. The protein operates within amino-sugar metabolism; N-acetylmuramate degradation. Specifically catalyzes the cleavage of the D-lactyl ether substituent of MurNAc 6-phosphate, producing GlcNAc 6-phosphate and D-lactate. This chain is N-acetylmuramic acid 6-phosphate etherase, found in Trichormus variabilis (strain ATCC 29413 / PCC 7937) (Anabaena variabilis).